We begin with the raw amino-acid sequence, 385 residues long: Benzoylsuccinyl-CoA thiolase subunit BbsB (385 aa).

Residue Arg19 participates in CoA binding. The active-site Acyl-thioester intermediate is Cys84. Gly121, Arg193, Cys204, and Cys205 together coordinate CoA.

This sequence belongs to the thiolase-like superfamily. Thiolase family. Heterotetramer composed of two BbsA subunits and two BbsB subunits. BbsB forms homodimeric subcomplexes. Both BbsA and BbsB are essential for enzymatic activity.

It catalyses the reaction (S)-2-benzoylsuccinyl-CoA + CoA = benzoyl-CoA + succinyl-CoA. It participates in xenobiotic degradation; toluene degradation. Component of the BbsAB thiolase complex, which catalyzes the thiolytic cleavage of (S)-2-benzoylsuccinyl-CoA to succinyl-CoA and benzoyl-CoA, the final step of anaerobic toluene metabolism. This is Benzoylsuccinyl-CoA thiolase subunit BbsB from Thauera aromatica.